The primary structure comprises 111 residues: WAP four-disulfide core domain protein 12 (111 aa).

Positions 1–23 (MGSSSFLVLMVSLALVTLVVVEG) are cleaved as a signal peptide. The 48-residue stretch at 27–74 (GIEKAGVCPADNVRCFKSNPPQCHTDQDCLGERKCCYLHCGFKCVIPV) folds into the WAP domain. Cystine bridges form between cysteine 34–cysteine 62, cysteine 41–cysteine 66, cysteine 49–cysteine 61, and cysteine 55–cysteine 70. The segment at 80–111 (GGNKDEDVSGPHPEPGWEAKSPGSSSTGCPQI) is disordered. The segment covering 101 to 111 (PGSSSTGCPQI) has biased composition (polar residues).

It localises to the secreted. Functionally, antibacterial protein. Putative acid-stable proteinase inhibitor. The protein is WAP four-disulfide core domain protein 12 (WFDC12) of Colobus guereza (Mantled guereza).